The following is a 515-amino-acid chain: Endoglucanase 23 (515 aa).

Residues 1-29 form the signal peptide; that stretch reads MALLSAPVRRRRSRVRVLLVCCCLLLALA. D95 (nucleophile) is an active-site residue. Residues N178, N375, and N384 are each glycosylated (N-linked (GlcNAc...) asparagine). H426 is an active-site residue. N452 carries N-linked (GlcNAc...) asparagine glycosylation. Active-site residues include D477 and E486.

The protein belongs to the glycosyl hydrolase 9 (cellulase E) family.

It is found in the secreted. It carries out the reaction Endohydrolysis of (1-&gt;4)-beta-D-glucosidic linkages in cellulose, lichenin and cereal beta-D-glucans.. This Oryza sativa subsp. japonica (Rice) protein is Endoglucanase 23 (GLU12).